Consider the following 584-residue polypeptide: BEL1-like homeodomain protein 8 (584 aa).

The segment at 266-282 (SRFLEPAQKMLEEFCIS) is SR/KY domain. Residues 292–317 (ESTSMEDDDDDDDNLSGFSSSSEPLE) form a disordered region. Acidic residues predominate over residues 295–305 (SMEDDDDDDDN). A BELL domain region spans residues 316–387 (LEPKNRLKKA…ALRTAIAEHV (72 aa)). The homeobox DNA-binding region spans 424 to 486 (IWRPQRGLPE…NARVRLWKPM (63 aa)). Residues 503-529 (TSHNIEPSNRPNTVSSPSHEQTLTGLS) are disordered.

Belongs to the TALE/BELL homeobox family. May form heterodimeric complex with the TALE/KNOX proteins STM and KNAT1/BP.

It localises to the nucleus. Required for specifying floral primordia and establishing early internode patterning events during inflorescence development. In Arabidopsis thaliana (Mouse-ear cress), this protein is BEL1-like homeodomain protein 8 (BLH8).